Consider the following 460-residue polypeptide: Bifunctional protein GlmU (460 aa).

The tract at residues 1 to 232 is pyrophosphorylase; that stretch reads MALNVVILAA…AIEVEGANNR (232 aa). UDP-N-acetyl-alpha-D-glucosamine-binding positions include 8–11, K22, Q73, 78–79, 100–102, G137, E157, N172, and N230; these read LAAG, GT, and YGD. D102 is a Mg(2+) binding site. Position 230 (N230) interacts with Mg(2+). Residues 233-253 form a linker region; it reads VQLAQLERAYQAREAEKLMLA. Residues 254 to 460 form an N-acetyltransferase region; it reads GANLRDPSRI…GWQRPVKIKK (207 aa). UDP-N-acetyl-alpha-D-glucosamine is bound by residues R336 and K354. H366 serves as the catalytic Proton acceptor. Positions 369 and 380 each coordinate UDP-N-acetyl-alpha-D-glucosamine. Residues A383, 389 to 390, S408, A426, and R443 contribute to the acetyl-CoA site; that span reads NY.

In the N-terminal section; belongs to the N-acetylglucosamine-1-phosphate uridyltransferase family. The protein in the C-terminal section; belongs to the transferase hexapeptide repeat family. In terms of assembly, homotrimer. Mg(2+) serves as cofactor.

Its subcellular location is the cytoplasm. It catalyses the reaction alpha-D-glucosamine 1-phosphate + acetyl-CoA = N-acetyl-alpha-D-glucosamine 1-phosphate + CoA + H(+). The catalysed reaction is N-acetyl-alpha-D-glucosamine 1-phosphate + UTP + H(+) = UDP-N-acetyl-alpha-D-glucosamine + diphosphate. It functions in the pathway nucleotide-sugar biosynthesis; UDP-N-acetyl-alpha-D-glucosamine biosynthesis; N-acetyl-alpha-D-glucosamine 1-phosphate from alpha-D-glucosamine 6-phosphate (route II): step 2/2. It participates in nucleotide-sugar biosynthesis; UDP-N-acetyl-alpha-D-glucosamine biosynthesis; UDP-N-acetyl-alpha-D-glucosamine from N-acetyl-alpha-D-glucosamine 1-phosphate: step 1/1. The protein operates within bacterial outer membrane biogenesis; LPS lipid A biosynthesis. Its function is as follows. Catalyzes the last two sequential reactions in the de novo biosynthetic pathway for UDP-N-acetylglucosamine (UDP-GlcNAc). The C-terminal domain catalyzes the transfer of acetyl group from acetyl coenzyme A to glucosamine-1-phosphate (GlcN-1-P) to produce N-acetylglucosamine-1-phosphate (GlcNAc-1-P), which is converted into UDP-GlcNAc by the transfer of uridine 5-monophosphate (from uridine 5-triphosphate), a reaction catalyzed by the N-terminal domain. The polypeptide is Bifunctional protein GlmU (Shewanella baltica (strain OS155 / ATCC BAA-1091)).